The chain runs to 739 residues: Catalase-peroxidase 2 (739 aa).

The first 26 residues, 1–26, serve as a signal peptide directing secretion; sequence MKKTTIPTLSALTLAMSLAFGGAAIA. Residues 105–227 constitute a cross-link (tryptophyl-tyrosyl-methioninium (Trp-Tyr) (with M-253)); sequence WHSAGVYRIF…MGATQMGLIY (123 aa). Catalysis depends on histidine 106, which acts as the Proton acceptor. A cross-link (tryptophyl-tyrosyl-methioninium (Tyr-Met) (with W-105)) is located at residues 227-253; it reads YVNPEGPNGVPDPLASAKEIRDTFGRM. Heme b is bound at residue histidine 268.

It belongs to the peroxidase family. Peroxidase/catalase subfamily. In terms of assembly, homodimer or homotetramer. The cofactor is heme b. In terms of processing, formation of the three residue Trp-Tyr-Met cross-link is important for the catalase, but not the peroxidase activity of the enzyme.

It carries out the reaction H2O2 + AH2 = A + 2 H2O. The catalysed reaction is 2 H2O2 = O2 + 2 H2O. Functionally, bifunctional enzyme with both catalase and broad-spectrum peroxidase activity. This chain is Catalase-peroxidase 2, found in Shewanella sp. (strain MR-4).